Here is a 500-residue protein sequence, read N- to C-terminus: Lysine--tRNA ligase (500 aa).

2 residues coordinate Mg(2+): glutamate 410 and glutamate 417.

It belongs to the class-II aminoacyl-tRNA synthetase family. In terms of assembly, homodimer. It depends on Mg(2+) as a cofactor.

The protein resides in the cytoplasm. It carries out the reaction tRNA(Lys) + L-lysine + ATP = L-lysyl-tRNA(Lys) + AMP + diphosphate. This is Lysine--tRNA ligase from Shewanella sediminis (strain HAW-EB3).